A 310-amino-acid chain; its full sequence is Ribosomal RNA small subunit methyltransferase H (310 aa).

S-adenosyl-L-methionine is bound by residues 33-35, Asp-53, Phe-79, Asp-100, and Gln-107; that span reads AGH.

This sequence belongs to the methyltransferase superfamily. RsmH family.

It is found in the cytoplasm. It catalyses the reaction cytidine(1402) in 16S rRNA + S-adenosyl-L-methionine = N(4)-methylcytidine(1402) in 16S rRNA + S-adenosyl-L-homocysteine + H(+). Specifically methylates the N4 position of cytidine in position 1402 (C1402) of 16S rRNA. The polypeptide is Ribosomal RNA small subunit methyltransferase H (Clostridium botulinum (strain Eklund 17B / Type B)).